Here is a 182-residue protein sequence, read N- to C-terminus: Flavodoxin (182 aa).

The region spanning 4–173 (IGLFFGSDTG…RLKGWLSLIA (170 aa)) is the Flavodoxin-like domain.

This sequence belongs to the flavodoxin family. Requires FMN as cofactor.

Its function is as follows. Low-potential electron donor to a number of redox enzymes. NifF is the electron donor to nitrogenase. The polypeptide is Flavodoxin (nifF) (Rhodobacter capsulatus (strain ATCC BAA-309 / NBRC 16581 / SB1003)).